The following is a 74-amino-acid chain: Conotoxin Im6.10 (74 aa).

Positions 1–19 are cleaved as a signal peptide; it reads MKTGMIICLLLIAFMDADG. Positions 20 to 47 are excised as a propeptide; the sequence is SPGDTLYSQKTADTDSGMKRFQKTFQKR. 3 disulfides stabilise this stretch: Cys-49-Cys-58, Cys-52-Cys-63, and Cys-57-Cys-73.

In terms of tissue distribution, expressed by the venom duct.

The protein resides in the secreted. In terms of biological role, probable neurotoxin. The chain is Conotoxin Im6.10 from Conus imperialis (Imperial cone).